The following is a 522-amino-acid chain: Protein nucleotidyltransferase YdiU (522 aa).

Residues Gly-109, Gly-111, Arg-112, Lys-132, Asp-144, Gly-145, Arg-195, and Arg-202 each contribute to the ATP site. The active-site Proton acceptor is Asp-271. Residues Asn-272 and Asp-281 each coordinate Mg(2+). Position 281 (Asp-281) interacts with ATP.

This sequence belongs to the SELO family. Requires Mg(2+) as cofactor. The cofactor is Mn(2+).

It carries out the reaction L-seryl-[protein] + ATP = 3-O-(5'-adenylyl)-L-seryl-[protein] + diphosphate. The catalysed reaction is L-threonyl-[protein] + ATP = 3-O-(5'-adenylyl)-L-threonyl-[protein] + diphosphate. It catalyses the reaction L-tyrosyl-[protein] + ATP = O-(5'-adenylyl)-L-tyrosyl-[protein] + diphosphate. The enzyme catalyses L-histidyl-[protein] + UTP = N(tele)-(5'-uridylyl)-L-histidyl-[protein] + diphosphate. It carries out the reaction L-seryl-[protein] + UTP = O-(5'-uridylyl)-L-seryl-[protein] + diphosphate. The catalysed reaction is L-tyrosyl-[protein] + UTP = O-(5'-uridylyl)-L-tyrosyl-[protein] + diphosphate. In terms of biological role, nucleotidyltransferase involved in the post-translational modification of proteins. It can catalyze the addition of adenosine monophosphate (AMP) or uridine monophosphate (UMP) to a protein, resulting in modifications known as AMPylation and UMPylation. The polypeptide is Protein nucleotidyltransferase YdiU (Burkholderia multivorans (strain ATCC 17616 / 249)).